Reading from the N-terminus, the 219-residue chain is Probable octanoyltransferase (219 aa).

The BPL/LPL catalytic domain occupies 43–219; the sequence is QPPKPTIITS…NNLDSFLMSK (177 aa). Substrate is bound by residues 83–90, 151–153, and 164–166; these read RGGQTTFH, AIG, and GLA. The active-site Acyl-thioester intermediate is the Cys-182.

This sequence belongs to the LipB family.

It catalyses the reaction octanoyl-[ACP] + L-lysyl-[protein] = N(6)-octanoyl-L-lysyl-[protein] + holo-[ACP] + H(+). The protein operates within protein modification; protein lipoylation via endogenous pathway; protein N(6)-(lipoyl)lysine from octanoyl-[acyl-carrier-protein]: step 1/2. Catalyzes the transfer of endogenously produced octanoic acid from octanoyl-acyl-carrier-protein onto the lipoyl domains of lipoate-dependent enzymes. Lipoyl-ACP can also act as a substrate although octanoyl-ACP is likely to be the physiological substrate. This Schizosaccharomyces pombe (strain 972 / ATCC 24843) (Fission yeast) protein is Probable octanoyltransferase.